The chain runs to 254 residues: Coenzyme F420:L-glutamate ligase (254 aa).

Residues 11–14, 40–41, and lysine 45 each bind GTP; these read IPLI and ST. Aspartate 109 serves as a coordination point for a divalent metal cation. Residue asparagine 112 participates in GTP binding. Positions 150, 151, and 208 each coordinate a divalent metal cation. 206–213 contributes to the GTP binding site; it reads MGEGAGGI.

It belongs to the CofE family. Homodimer. Requires Mg(2+) as cofactor. Mn(2+) serves as cofactor. K(+) is required as a cofactor.

It catalyses the reaction oxidized coenzyme F420-0 + GTP + L-glutamate = oxidized coenzyme F420-1 + GDP + phosphate + H(+). The enzyme catalyses oxidized coenzyme F420-1 + GTP + L-glutamate = oxidized coenzyme F420-2 + GDP + phosphate + H(+). It participates in cofactor biosynthesis; coenzyme F420 biosynthesis. In terms of biological role, catalyzes the GTP-dependent successive addition of two or more gamma-linked L-glutamates to the L-lactyl phosphodiester of 7,8-didemethyl-8-hydroxy-5-deazariboflavin (F420-0) to form coenzyme F420-0-glutamyl-glutamate (F420-2) or polyglutamated F420 derivatives. This chain is Coenzyme F420:L-glutamate ligase, found in Methanosarcina mazei (strain ATCC BAA-159 / DSM 3647 / Goe1 / Go1 / JCM 11833 / OCM 88) (Methanosarcina frisia).